We begin with the raw amino-acid sequence, 61 residues long: Nakoroxin (61 aa).

4 cysteine pairs are disulfide-bonded: Cys3–Cys19, Cys12–Cys37, Cys41–Cys49, and Cys50–Cys55.

It belongs to the three-finger toxin family. Short-chain subfamily. As to expression, expressed by the venom gland.

The protein localises to the secreted. In terms of biological role, shows no cytotoxicity and does not inhibit the binding of alpha-bungarotoxin to nicotinic acetylcholine receptors of muscle and alpha-7/CHRNA7 types. However, it potentiates the binding of alpha-bungarotoxin to the acetylcholine-binding protein from Lymnaea stagnalis. This is Nakoroxin from Naja kaouthia (Monocled cobra).